The sequence spans 518 residues: Lysine--tRNA ligase (518 aa).

Mg(2+)-binding residues include Glu-407 and Glu-414.

This sequence belongs to the class-II aminoacyl-tRNA synthetase family. In terms of assembly, homodimer. It depends on Mg(2+) as a cofactor.

It is found in the cytoplasm. It carries out the reaction tRNA(Lys) + L-lysine + ATP = L-lysyl-tRNA(Lys) + AMP + diphosphate. This is Lysine--tRNA ligase from Helicobacter hepaticus (strain ATCC 51449 / 3B1).